Consider the following 331-residue polypeptide: MRGYLVAIFLSAVFLYYVLHCILWGTNVYWAAPVEMKRRNKIQPCLSKPAFASLLRFHQFHPFLCAADFRKIASLYGSDKFDLPYGMRTSAEYFRLALSKLQSCDLFDEFDNIPCKKCVVVGNGGVLKNKTLGEKIDSYDVIIRMNNGPVLGHEEEVGRRTTFRLFYPESVFSDPIHNDPNTTVILTAFKPHDLRWLLELLMGDKINTNGFWKKPALNLIYKPYQIRILDPFIIRTAAYELLHFPKVFPKNQKPKHPTTGIIAITLAFYICHEVHLAGFKYNFSDLKSPLHYYGNATMSLMNKNAYHNVTAEQLFLKDIIEKNLVINLTQD.

Topologically, residues 1–4 (MRGY) are cytoplasmic. A helical; Signal-anchor for type II membrane protein transmembrane segment spans residues 5–25 (LVAIFLSAVFLYYVLHCILWG). Over 26–331 (TNVYWAAPVE…KNLVINLTQD (306 aa)) the chain is Lumenal. N-linked (GlcNAc...) asparagine glycosylation is found at Asn-129, Asn-181, Asn-282, Asn-295, Asn-308, and Asn-327.

Belongs to the glycosyltransferase 29 family.

Its subcellular location is the golgi apparatus membrane. The catalysed reaction is a neolactoside nLc4Cer(d18:1(4E)) + CMP-N-acetyl-beta-neuraminate = a neolactoside IV(3)-alpha-NeuAc-nLc4Cer(d18:1(4E)) + CMP + H(+). The enzyme catalyses a beta-D-galactosyl-(1-&gt;4)-N-acetyl-beta-D-glucosaminyl derivative + CMP-N-acetyl-beta-neuraminate = an N-acetyl-alpha-neuraminyl-(2-&gt;3)-beta-D-galactosyl-(1-&gt;4)-N-acetyl-beta-D-glucosaminyl derivative + CMP + H(+). It carries out the reaction a neolactoside nLc6Cer(d18:1(4E)) + CMP-N-acetyl-beta-neuraminate = a neolactoside VI(3)-alpha-NeuNAc-nLc6Cer(d18:1(4E)) + CMP + H(+). Transfers the sialyl residue from CMP-N-acetyl-beta-neuraminate to the terminal galactose residue on sugar chains of glycoproteins and glycolipids. It's alpha-2,3-sialyltransferase activity is specific toward type II glycan chains (Galbeta1-4GlcNAc) on glycoproteins and glycolipids such as neolactosides nLc4Cer and nLc6Cer, whose sialyl-products serve as precursors for the Lewis X antigen. Critically involved in the synthesis of functional selectin ligands needed for neutrophil recruitment during inflammation and lymphocyte homing to the lymph nodes. This Pongo abelii (Sumatran orangutan) protein is Type 2 lactosamine alpha-2,3-sialyltransferase (ST3GAL6).